The primary structure comprises 199 residues: MYEGVVQDLIDELGRLPGVGPKSAQRIAFHILQAEPTDVRRLAQCLMEVKAKVRFCATCGNVAQEELCNICRDPRRDLSVICVVEEPKDVVAIERTREFRGKYHVLGGAISPIEGVGPDDLRIRELLARLADGTVTELILATDPNLEGEATATYLARMIKPMGLKVTRLASGLPVGGDLEYADEVTLGRAFEGRRLLDV.

The C4-type zinc-finger motif lies at 56–71; the sequence is CATCGNVAQEELCNIC. The region spanning 79-174 is the Toprim domain; the sequence is SVICVVEEPK…KVTRLASGLP (96 aa).

The protein belongs to the RecR family.

In terms of biological role, may play a role in DNA repair. It seems to be involved in an RecBC-independent recombinational process of DNA repair. It may act with RecF and RecO. This Streptomyces avermitilis (strain ATCC 31267 / DSM 46492 / JCM 5070 / NBRC 14893 / NCIMB 12804 / NRRL 8165 / MA-4680) protein is Recombination protein RecR.